The chain runs to 184 residues: Large ribosomal subunit protein uL6 (184 aa).

The protein belongs to the universal ribosomal protein uL6 family. Part of the 50S ribosomal subunit.

Functionally, this protein binds to the 23S rRNA, and is important in its secondary structure. It is located near the subunit interface in the base of the L7/L12 stalk, and near the tRNA binding site of the peptidyltransferase center. This is Large ribosomal subunit protein uL6 from Mycoplasma genitalium (strain ATCC 33530 / DSM 19775 / NCTC 10195 / G37) (Mycoplasmoides genitalium).